Here is a 137-residue protein sequence, read N- to C-terminus: Putative pre-16S rRNA nuclease (137 aa).

This sequence belongs to the YqgF nuclease family.

The protein localises to the cytoplasm. In terms of biological role, could be a nuclease involved in processing of the 5'-end of pre-16S rRNA. This is Putative pre-16S rRNA nuclease from Clostridium perfringens (strain ATCC 13124 / DSM 756 / JCM 1290 / NCIMB 6125 / NCTC 8237 / Type A).